We begin with the raw amino-acid sequence, 103 residues long: UPF0473 protein LCA_0390 (103 aa).

It belongs to the UPF0473 family.

The sequence is that of UPF0473 protein LCA_0390 from Latilactobacillus sakei subsp. sakei (strain 23K) (Lactobacillus sakei subsp. sakei).